Reading from the N-terminus, the 395-residue chain is Elongation factor Tu (395 aa).

In terms of domain architecture, tr-type G spans 10-204; it reads KPHVNIGTIG…VVDEYIPTPV (195 aa). The segment at 19-26 is G1; the sequence is GHVDHGKT. 19–26 lines the GTP pocket; it reads GHVDHGKT. T26 is a binding site for Mg(2+). The interval 60-64 is G2; the sequence is GITIN. The segment at 81 to 84 is G3; sequence DAPG. GTP contacts are provided by residues 81 to 85 and 136 to 139; these read DAPGH and NKTD. Positions 136-139 are G4; that stretch reads NKTD. The segment at 174–176 is G5; sequence SAL.

Belongs to the TRAFAC class translation factor GTPase superfamily. Classic translation factor GTPase family. EF-Tu/EF-1A subfamily. As to quaternary structure, monomer.

The protein localises to the cytoplasm. It carries out the reaction GTP + H2O = GDP + phosphate + H(+). Its function is as follows. GTP hydrolase that promotes the GTP-dependent binding of aminoacyl-tRNA to the A-site of ribosomes during protein biosynthesis. The polypeptide is Elongation factor Tu (Lactiplantibacillus plantarum (strain ATCC BAA-793 / NCIMB 8826 / WCFS1) (Lactobacillus plantarum)).